The chain runs to 481 residues: Proline--tRNA ligase (481 aa).

It belongs to the class-II aminoacyl-tRNA synthetase family. ProS type 3 subfamily. Homodimer.

Its subcellular location is the cytoplasm. The catalysed reaction is tRNA(Pro) + L-proline + ATP = L-prolyl-tRNA(Pro) + AMP + diphosphate. Its function is as follows. Catalyzes the attachment of proline to tRNA(Pro) in a two-step reaction: proline is first activated by ATP to form Pro-AMP and then transferred to the acceptor end of tRNA(Pro). The sequence is that of Proline--tRNA ligase from Chlorobium phaeobacteroides (strain BS1).